Consider the following 300-residue polypeptide: Ribosomal protein L11 methyltransferase (300 aa).

Thr-152, Gly-173, Asp-195, and Asn-234 together coordinate S-adenosyl-L-methionine.

Belongs to the methyltransferase superfamily. PrmA family.

It is found in the cytoplasm. It catalyses the reaction L-lysyl-[protein] + 3 S-adenosyl-L-methionine = N(6),N(6),N(6)-trimethyl-L-lysyl-[protein] + 3 S-adenosyl-L-homocysteine + 3 H(+). Its function is as follows. Methylates ribosomal protein L11. This is Ribosomal protein L11 methyltransferase from Burkholderia mallei (strain NCTC 10247).